A 290-amino-acid chain; its full sequence is Glycine--tRNA ligase alpha subunit (290 aa).

It belongs to the class-II aminoacyl-tRNA synthetase family. In terms of assembly, tetramer of two alpha and two beta subunits.

It is found in the cytoplasm. The catalysed reaction is tRNA(Gly) + glycine + ATP = glycyl-tRNA(Gly) + AMP + diphosphate. This Maridesulfovibrio salexigens (strain ATCC 14822 / DSM 2638 / NCIMB 8403 / VKM B-1763) (Desulfovibrio salexigens) protein is Glycine--tRNA ligase alpha subunit.